The following is a 251-amino-acid chain: Ubiquinone/menaquinone biosynthesis C-methyltransferase UbiE (251 aa).

Residues threonine 74, aspartate 95, 123 to 124 (NA), and serine 140 contribute to the S-adenosyl-L-methionine site.

The protein belongs to the class I-like SAM-binding methyltransferase superfamily. MenG/UbiE family.

It catalyses the reaction a 2-demethylmenaquinol + S-adenosyl-L-methionine = a menaquinol + S-adenosyl-L-homocysteine + H(+). The catalysed reaction is a 2-methoxy-6-(all-trans-polyprenyl)benzene-1,4-diol + S-adenosyl-L-methionine = a 5-methoxy-2-methyl-3-(all-trans-polyprenyl)benzene-1,4-diol + S-adenosyl-L-homocysteine + H(+). It functions in the pathway quinol/quinone metabolism; menaquinone biosynthesis; menaquinol from 1,4-dihydroxy-2-naphthoate: step 2/2. It participates in cofactor biosynthesis; ubiquinone biosynthesis. In terms of biological role, methyltransferase required for the conversion of demethylmenaquinol (DMKH2) to menaquinol (MKH2) and the conversion of 2-polyprenyl-6-methoxy-1,4-benzoquinol (DDMQH2) to 2-polyprenyl-3-methyl-6-methoxy-1,4-benzoquinol (DMQH2). The sequence is that of Ubiquinone/menaquinone biosynthesis C-methyltransferase UbiE from Escherichia fergusonii (strain ATCC 35469 / DSM 13698 / CCUG 18766 / IAM 14443 / JCM 21226 / LMG 7866 / NBRC 102419 / NCTC 12128 / CDC 0568-73).